The chain runs to 142 residues: HTH-type transcriptional regulator MntR (142 aa).

Residues 1 to 63 form the HTH dtxR-type domain; it reads MPTPSMEDYI…YEKYRGLVLT (63 aa). The Mn(2+) site is built by D8, E11, H77, E99, E102, and H103.

It belongs to the DtxR/MntR family. In terms of assembly, homodimer.

The protein localises to the cytoplasm. DNA binding is strongly activated by Mn(2+). Its function is as follows. Central regulator of manganese homeostasis. The sequence is that of HTH-type transcriptional regulator MntR from Bacillus cereus (strain G9842).